Reading from the N-terminus, the 471-residue chain is MDERFNKWLLTPVLTLLFVVIMYQYVSPSCTSSCTNFGEQPRAGEAGPPAVPGPARRAQAPPEEWERRPQLPPPPRGPPEGPRGAAAPEEEDEEPGDPREGEEEEEEDEPDPEAPENGSLPRFVPRFNFSLKDLTRFVDFNIKGRDVIVFLHIQKTGGTTFGRHLVKNIRLEQPCSCKAGQKKCTCHRPGKKETWLFSRFSTGWSCGLHADWTELTNCVPAIMEKKDCPRNHSHTRNFYYITMLRDPVSRYLSEWKHVQRGATWKTSLHMCDGRSPTPDELPTCYPGDDWSGVSLREFMDCTYNLANNRQVRMLADLSLVGCYNLTFMNESERNTILLQSAKNNLKNMAFFGLTEFQRKTQFLFERTFNLKFISPFTQFNITRASNVEINEGARQRIEDLNFLDMQLYEYAKDLFQQRYHHTKQLEHQRDRQKRREERRLQREHRDHQWPKEDGAAEGTVTEDYNSQVVRW.

The Cytoplasmic portion of the chain corresponds to 1 to 4; sequence MDER. A helical; Signal-anchor for type II membrane protein membrane pass occupies residues 5 to 27; it reads FNKWLLTPVLTLLFVVIMYQYVS. Residues 28-471 lie on the Lumenal side of the membrane; the sequence is PSCTSSCTNF…EDYNSQVVRW (444 aa). Residues 39-122 are disordered; the sequence is EQPRAGEAGP…EAPENGSLPR (84 aa). Low complexity predominate over residues 41–62; sequence PRAGEAGPPAVPGPARRAQAPP. The span at 70-81 shows a compositional bias: pro residues; sequence QLPPPPRGPPEG. A compositionally biased stretch (acidic residues) spans 88 to 114; that stretch reads PEEEDEEPGDPREGEEEEEEDEPDPEA. Residues asparagine 117 and asparagine 128 are each glycosylated (N-linked (GlcNAc...) asparagine). 152-160 lines the 3'-phosphoadenylyl sulfate pocket; the sequence is HIQKTGGTT. Substrate contacts are provided by residues 182–183, arginine 199, tryptophan 204, and histidine 209; that span reads KK. Catalysis depends on histidine 209, which acts as the Proton acceptor. Asparagine 231 carries N-linked (GlcNAc...) asparagine glycosylation. 3'-phosphoadenylyl sulfate contacts are provided by arginine 245 and serine 253. Histidine 257 and tryptophan 264 together coordinate substrate. N-linked (GlcNAc...) asparagine glycosylation is found at asparagine 324 and asparagine 329. 377 to 379 contributes to the 3'-phosphoadenylyl sulfate binding site; it reads TQF. Residue asparagine 380 is glycosylated (N-linked (GlcNAc...) asparagine). 383-384 contacts 3'-phosphoadenylyl sulfate; sequence RA. Residues 422-471 are disordered; that stretch reads TKQLEHQRDRQKRREERRLQREHRDHQWPKEDGAAEGTVTEDYNSQVVRW. The span at 423–454 shows a compositional bias: basic and acidic residues; the sequence is KQLEHQRDRQKRREERRLQREHRDHQWPKEDG. Polar residues predominate over residues 462–471; that stretch reads EDYNSQVVRW.

This sequence belongs to the sulfotransferase 6 family.

The protein resides in the membrane. The catalysed reaction is alpha-D-glucosaminyl-[heparan sulfate](n) + 3'-phosphoadenylyl sulfate = 6-sulfo-alpha-D-glucosaminyl-[heparan sulfate](n) + adenosine 3',5'-bisphosphate + H(+). 6-O-sulfation enzyme which catalyzes the transfer of sulfate from 3'-phosphoadenosine 5'-phosphosulfate (PAPS) to position 6 of the N-sulfoglucosamine residue (GlcNS) of heparan sulfate. This chain is Heparan-sulfate 6-O-sulfotransferase 3 (HS6ST3), found in Homo sapiens (Human).